Reading from the N-terminus, the 855-residue chain is MKLLTAFSPLVVLILFQEQISCYYLTKYASSGYYQDADFVIGGLFSLRVTDGDTFISRSGVEDTSHIAEYVFADLIKYYQHILAMVFAIEKINKDPNILFNKSLGFFLFNVNFIEMKAAEGSMALLSGESPPIPNYSCRPEKTDKLVAVIGGISTSISIQISRVLSLYNVPQISYAPFDQILGTRVQLQSPYQFSMHTAALYQGIVQLLLYFTWIWVGLVVPDDMRGELYLRDITKEMISHGICFAFAEKVTEYSSMDTVNWKHFMERLTLTPVIITVGDTHSLLRIVYFVIFYNLSGNVWITTSDWYITTLPFEQNLIYTHFGGGLSFSFHMDEILGFKDFLRSVQPRKYPHDIFIRHVWSSLFGCPHYYQHRLWDLSQCEPNGSLSTRPLHAWDMNTSPYSYKVYAAVYAIAQALHEELSLRVEGDSSNKCLLQAPLPWKLHPFLQKGQLGRSTNEENTVNKEVSAIKLDIFNYQSLQSGTEAHVKVGEFVFDSHSVQHLSLNDKIITWGKHRSQTPLSVCSQSCPFGFSKTAVEGKPFCCFDCVPCPDGEIANKTDMDQCIKCPEDQYPNKQRNQCLPKIMVFLAHEDPLGTVLVSLAISLSAFSAMILGLFICYRETPIVRANNRNLSYLLLISLKLCFSCSLMFIGQPRTVTCVLRQIIFGIVFSIVISAILAKTFIVVMAFKAIKPGSILKMGMVTRLSNAIVCCGSIIQVCICAVWLGTYPPFPDVDMHSEFGQIILWCNEGSTLAFYCVLGYLGFLASLSLLIAFLARRLPDSFNEAKTITFSMLVFCSVWISFVPAYLSSKGKTMVAVEILSILASSAGLLGCIFLPKCYVILLKSGGHSRKKFFK.

Positions 1–22 are cleaved as a signal peptide; it reads MKLLTAFSPLVVLILFQEQISC. Residues 23 to 595 lie on the Extracellular side of the membrane; it reads YYLTKYASSG…FLAHEDPLGT (573 aa). Asn101 and Asn295 each carry an N-linked (GlcNAc...) asparagine glycan. A helical membrane pass occupies residues 596–616; sequence VLVSLAISLSAFSAMILGLFI. Over 617-630 the chain is Cytoplasmic; that stretch reads CYRETPIVRANNRN. Residues 631–651 form a helical membrane-spanning segment; the sequence is LSYLLLISLKLCFSCSLMFIG. Residues 652-662 are Extracellular-facing; that stretch reads QPRTVTCVLRQ. A helical transmembrane segment spans residues 663 to 683; the sequence is IIFGIVFSIVISAILAKTFIV. Residues 684-706 lie on the Cytoplasmic side of the membrane; that stretch reads VMAFKAIKPGSILKMGMVTRLSN. The helical transmembrane segment at 707–727 threads the bilayer; sequence AIVCCGSIIQVCICAVWLGTY. Topologically, residues 728–753 are extracellular; sequence PPFPDVDMHSEFGQIILWCNEGSTLA. Residues 754–774 form a helical membrane-spanning segment; it reads FYCVLGYLGFLASLSLLIAFL. At 775–786 the chain is on the cytoplasmic side; that stretch reads ARRLPDSFNEAK. The helical transmembrane segment at 787 to 807 threads the bilayer; that stretch reads TITFSMLVFCSVWISFVPAYL. The Extracellular portion of the chain corresponds to 808-814; the sequence is SSKGKTM. A helical membrane pass occupies residues 815 to 835; the sequence is VAVEILSILASSAGLLGCIFL. The Cytoplasmic segment spans residues 836–855; the sequence is PKCYVILLKSGGHSRKKFFK.

This sequence belongs to the G-protein coupled receptor 3 family. In terms of tissue distribution, expressed in the basal epithelium of the vomeronasal organ. Located to vomeronasal sensory neurons that project their axons to six to ten glomeruli that reside in globally conserved areas within the caudal accessory olfactory bulb (AOB).

Its subcellular location is the cell membrane. Functionally, putative pheromone receptor. The polypeptide is Vomeronasal type-2 receptor 26 (Vmn2r26) (Mus musculus (Mouse)).